A 2240-amino-acid chain; its full sequence is Nonribisomal peptide synthetase notE (2240 aa).

A disordered region spans residues 22 to 52 (TETMRETLSSSSSPLSLSSITSPLSSASEPP). Positions 28-52 (TLSSSSSPLSLSSITSPLSSASEPP) are enriched in low complexity. An adenylation 1 region spans residues 85 to 484 (QQRCREAPES…GRKEGQVKIR (400 aa)). The 77-residue stretch at 616-692 (PPTTATEHAL…EQARKATPVS (77 aa)) folds into the Carrier 1 domain. Serine 653 carries the post-translational modification O-(pantetheine 4'-phosphoryl)serine. The segment at 732 to 1144 (EDIFPCTPLQ…DFASPQDRDL (413 aa)) is condensation 1. The tract at residues 1167–1564 (QEARQPSREA…GRRDTQLKLR (398 aa)) is adenylation 2. A Carrier 2 domain is found at 1700–1776 (PVSRGPELRL…ELARCTGEEP (77 aa)). O-(pantetheine 4'-phosphoryl)serine is present on serine 1737. A condensation 2 region spans residues 1845–2159 (FSFHGEVSVE…ILQHQNIDMD (315 aa)). The disordered stretch occupies residues 2008–2027 (CTMPVKATPPTDSDDSRPSA).

Belongs to the NRP synthetase family.

It carries out the reaction L-proline + L-tryptophan + 2 ATP = brevianamide F + 2 AMP + 2 diphosphate + 2 H(+). It functions in the pathway alkaloid biosynthesis. Functionally, nonribisomal peptide synthetase; part of the gene cluster that mediates the biosynthesis of notoamide, a fungal indole alkaloid that belongs to a family of natural products containing a characteristic bicyclo[2.2.2]diazaoctane core. The first step of notoamide biosynthesis involves coupling of L-proline and L-tryptophan by the bimodular NRPS notE, to produce cyclo-L-tryptophan-L-proline called brevianamide F. The reverse prenyltransferase notF then acts as a deoxybrevianamide E synthase and converts brevianamide F to deoxybrevianamide E via reverse prenylation at C-2 of the indole ring leading to the bicyclo[2.2.2]diazaoctane core. Deoxybrevianamide E is further hydroxylated at C-6 of the indole ring, likely catalyzed by the cytochrome P450 monooxygenase notG, to yield 6-hydroxy-deoxybrevianamide E. 6-hydroxy-deoxybrevianamide E is a specific substrate of the prenyltransferase notC for normal prenylation at C-7 to produce 6-hydroxy-7-prenyl-deoxybrevianamide, also called notoamide S. As the proposed pivotal branching point in notoamide biosynthesis, notoamide S can be diverted to notoamide E through an oxidative pyran ring closure putatively catalyzed by either notH cytochrome P450 monooxygenase or the notD FAD-linked oxidoreductase. This step would be followed by an indole 2,3-epoxidation-initiated pinacol-like rearrangement catalyzed by the notB FAD-dependent monooxygenase leading to the formation of notoamide C and notoamide D. On the other hand notoamide S is converted to notoamide T by notH (or notD), a bifunctional oxidase that also functions as the intramolecular Diels-Alderase responsible for generation of (+)-notoamide T. To generate antipodal (-)-notoaminide T, notH' (or notD') in Aspergillus versicolor is expected to catalyze a Diels-Alder reaction leading to the opposite stereochemistry. The remaining oxidoreductase notD (or notH) likely catalyzes the oxidative pyran ring formation to yield (+)-stephacidin A. The FAD-dependent monooxygenase notI is highly similar to notB and is predicted to catalyze a similar conversion from (+)-stephacidin A to (-)-notoamide B via the 2,3-epoxidation of (+)-stephacidin A followed by a pinacol-type rearrangement. Finally, it remains unclear which enzyme could be responsible for the final hydroxylation steps leading to notoamide A and sclerotiamide. In Aspergillus sp. (strain MF297-2), this protein is Nonribisomal peptide synthetase notE.